Consider the following 1272-residue polypeptide: AF4/FMR2 family member 2 (1272 aa).

7 disordered regions span residues 151–190, 204–231, 372–401, 422–497, 557–694, 715–743, and 772–899; these read SNRKSKSEWPRDSHNTSPAQASQTSSQPNKMQTSTQDPPQ, PQIGTVEKSNPSSKEENNPNSGGEDTFK, TLQKWSDPSSRASTKMLEDDLKLSSDEDDL, KAKP…QLDK, IREK…ETLQ, TLSTLTNGNSNNLSTSNEETAFSPPPAMQ, and PGQN…QDKN. Residues 155–164 show a composition bias toward basic and acidic residues; the sequence is SKSEWPRDSH. Over residues 165–179 the composition is skewed to low complexity; that stretch reads NTSPAQASQTSSQPN. Polar residues predominate over residues 180-189; sequence KMQTSTQDPP. The span at 210–227 shows a compositional bias: low complexity; that stretch reads EKSNPSSKEENNPNSGGE. Over residues 374 to 384 the composition is skewed to polar residues; sequence QKWSDPSSRAS. Residues 387–396 show a composition bias toward basic and acidic residues; sequence MLEDDLKLSS. Ser395 carries the post-translational modification Phosphoserine. Over residues 436-450 the composition is skewed to polar residues; it reads TPQSTPATQTNVGSG. Thr482 carries the phosphothreonine modification. A compositionally biased stretch (polar residues) spans 580–590; the sequence is STSVDTVSQRT. Basic and acidic residues predominate over residues 620–633; it reads PKEKGSVELPDPPR. Residues 634 to 644 show a composition bias toward basic residues; the sequence is SRNKATAHKPV. The segment covering 715 to 734 has biased composition (low complexity); the sequence is TLSTLTNGNSNNLSTSNEET. Residues 815–831 show a composition bias toward basic and acidic residues; it reads PAETAEKIPEKKQRLED. A compositionally biased stretch (pro residues) spans 841 to 850; that stretch reads CISPAPPHKP. The span at 887 to 899 shows a compositional bias: polar residues; sequence VSGNNGHFGQDKN.

This sequence belongs to the AF4 family. As to expression, highly expressed in the hippocampus, the piriform cortex, Purkinje cells and the cingulate gyrus.

The protein resides in the nucleus speckle. Functionally, RNA-binding protein. Might be involved in alternative splicing regulation through an interaction with G-quartet RNA structure. The protein is AF4/FMR2 family member 2 of Mus musculus (Mouse).